Reading from the N-terminus, the 92-residue chain is Signal recognition particle 19 kDa protein (92 aa).

The protein belongs to the SRP19 family. As to quaternary structure, part of the signal recognition particle protein translocation system, which is composed of SRP and FtsY. Archaeal SRP consists of a 7S RNA molecule of 300 nucleotides and two protein subunits: SRP54 and SRP19.

It localises to the cytoplasm. In terms of biological role, involved in targeting and insertion of nascent membrane proteins into the cytoplasmic membrane. Binds directly to 7S RNA and mediates binding of the 54 kDa subunit of the SRP. This chain is Signal recognition particle 19 kDa protein, found in Haloferax volcanii (strain ATCC 29605 / DSM 3757 / JCM 8879 / NBRC 14742 / NCIMB 2012 / VKM B-1768 / DS2) (Halobacterium volcanii).